Reading from the N-terminus, the 84-residue chain is Small ribosomal subunit protein bS18 (84 aa).

It belongs to the bacterial ribosomal protein bS18 family. As to quaternary structure, part of the 30S ribosomal subunit. Forms a tight heterodimer with protein bS6.

Functionally, binds as a heterodimer with protein bS6 to the central domain of the 16S rRNA, where it helps stabilize the platform of the 30S subunit. This chain is Small ribosomal subunit protein bS18, found in Mycoplasma mobile (strain ATCC 43663 / 163K / NCTC 11711) (Mesomycoplasma mobile).